The following is a 63-amino-acid chain: Anaphase-promoting complex subunit 13 (63 aa).

Positions K36–Q63 are disordered. The span at E53–Q63 shows a compositional bias: basic and acidic residues.

The protein belongs to the APC13 family. Component of the anaphase promoting complex/cyclosome (APC/C) complex. As to expression, expressed constitutively in roots, leaves, stems, buds, flowers, and seeds.

The protein localises to the nucleus. Its pathway is protein modification; protein ubiquitination. Component of the anaphase promoting complex/cyclosome (APC/C), a cell cycle-regulated E3 ubiquitin ligase that controls progression through mitosis and the G1 phase of the cell cycle. The APC/C complex acts by mediating ubiquitination and subsequent degradation of target proteins. Regulates global growth and development, including phyllotaxis and apical dominance. Required for pollen maturation. Promotes (pri) miRNA transcription of each MIR159 genes. This chain is Anaphase-promoting complex subunit 13, found in Arabidopsis thaliana (Mouse-ear cress).